Consider the following 418-residue polypeptide: Probable endo-beta-1,4-glucanase celB (418 aa).

Positions methionine 1–alanine 18 are cleaved as a signal peptide. Residues asparagine 46, asparagine 118, and asparagine 136 are each glycosylated (N-linked (GlcNAc...) asparagine). The active-site Nucleophile is glutamate 215. The Proton donor role is filled by glutamate 220. 2 N-linked (GlcNAc...) asparagine glycosylation sites follow: asparagine 234 and asparagine 291.

The protein belongs to the glycosyl hydrolase 7 (cellulase C) family.

It is found in the secreted. The catalysed reaction is Endohydrolysis of (1-&gt;4)-beta-D-glucosidic linkages in cellulose, lichenin and cereal beta-D-glucans.. Its function is as follows. Has endoglucanase activity on substrates containing beta-1,4 glycosidic bonds, like in carboxymethylcellulose (CMC), hydroxyethylcellulose (HEC) and beta-glucan. Involved in the degradation of complex natural cellulosic substrates. The polypeptide is Probable endo-beta-1,4-glucanase celB (celB) (Aspergillus clavatus (strain ATCC 1007 / CBS 513.65 / DSM 816 / NCTC 3887 / NRRL 1 / QM 1276 / 107)).